A 949-amino-acid chain; its full sequence is Phosphocholine transferase AnkX (949 aa).

The Fido domain maps to 155–289 (LNPEQIPDLA…IFNTVEIIEQ (135 aa)). ANK repeat units lie at residues 391–420 (VGKT…DLSL), 424–453 (DGKT…SQED), 464–494 (HGKT…QINE), 498–527 (SGSS…DISD), 554–583 (LNKE…DIDI), 588–617 (DKAT…NTRL), 658–687 (NGNP…RVDF), 691–720 (LGNN…TLLH), 725–767 (ERRN…DLNK), and 771–800 (KGKT…HTNI).

Its subcellular location is the secreted. It is found in the host cytoplasm. The catalysed reaction is [Rab1 protein]-L-serine + CDP-choline = [Rab1 protein]-O-phosphocholine-L-serine + CMP + H(+). Virulence effector that plays a role in hijacking the host vesicular trafficking by recruiting the small guanosine triphosphatase (GTPase) Rab1 to the cytosolic face of the Legionella-containing vacuole (LCVs). Acts as a phosphocholine transferase by mediating the addition of phosphocholine to Ser residues of host RAB1 (RAB1A, RAB1B or RAB1C) and RAB35, leading to displacement of GDP dissociation inhibitors (GDI). Phosphocholination of target proteins also impairs accessibility to GTPase effector LepB. Can act on both GDP-bound and GTP-bound Rab proteins. This Legionella pneumophila subsp. pneumophila (strain Philadelphia 1 / ATCC 33152 / DSM 7513) protein is Phosphocholine transferase AnkX (ankX).